The chain runs to 262 residues: 3-dehydro-D-guloside 4-epimerase (262 aa).

The active-site Proton donor/acceptor is the E146. Residues E146 and D179 each coordinate Mn(2+). Substrate is bound at residue H182. H205 contributes to the Mn(2+) binding site. R211 contacts substrate. The Proton donor/acceptor role is filled by E240. E240 is a Mn(2+) binding site.

This sequence belongs to the hyi family. Mn(2+) serves as cofactor.

It carries out the reaction a 3-dehydro-D-guloside = a 3-dehydro-D-glucoside. Its function is as follows. Catalyzes the epimerization at C4 of 3-dehydro-D-gulosides leading to 3-dehydro-D-glucosides. Probably functions in a metabolic pathway that transforms D-gulosides to D-glucosides. Can use methyl alpha-3-dehydro-D-glucoside and methyl beta-3-dehydro-D-glucoside as substrates in vitro. However, the actual specific physiological substrates for this metabolic pathway are unknown. Cannot act on D-psicose, D-fructose, D-tagatose, D-sorbose, L-xylulose, or L-ribulose. This Escherichia coli (strain K12) protein is 3-dehydro-D-guloside 4-epimerase (ycjR).